Reading from the N-terminus, the 336-residue chain is Serpentine receptor class gamma-13 (336 aa).

8 consecutive transmembrane segments (helical) span residues 32–52, 68–88, 93–113, 133–153, 156–176, 210–230, 246–266, and 277–297; these read LKYI…FLII, FFII…SEIL, FIYV…PSIF, VFLS…SAIW, ILTP…WNVL, FIVS…ALLI, TMVL…FAFF, and LLRV…IIFI.

This sequence belongs to the nematode receptor-like protein srg family.

The protein localises to the membrane. In Caenorhabditis elegans, this protein is Serpentine receptor class gamma-13 (srg-13).